A 285-amino-acid chain; its full sequence is 2,3,4,5-tetrahydropyridine-2,6-dicarboxylate N-succinyltransferase (285 aa).

It belongs to the transferase hexapeptide repeat family.

Its subcellular location is the cytoplasm. The enzyme catalyses (S)-2,3,4,5-tetrahydrodipicolinate + succinyl-CoA + H2O = (S)-2-succinylamino-6-oxoheptanedioate + CoA. The protein operates within amino-acid biosynthesis; L-lysine biosynthesis via DAP pathway; LL-2,6-diaminopimelate from (S)-tetrahydrodipicolinate (succinylase route): step 1/3. This Beijerinckia indica subsp. indica (strain ATCC 9039 / DSM 1715 / NCIMB 8712) protein is 2,3,4,5-tetrahydropyridine-2,6-dicarboxylate N-succinyltransferase.